The following is a 479-amino-acid chain: Aldehyde dehydrogenase family 3 member B2 (479 aa).

Active-site residues include E223 and C257. C476 bears the Cysteine methyl ester mark. Residue C476 is the site of S-geranylgeranyl cysteine attachment. A propeptide spans 477 to 479 (TLL) (removed in mature form).

Belongs to the aldehyde dehydrogenase family. Post-translationally, geranylgeranylation is important for localization to lipid droplets and enzyme activity. As to expression, expressed in testis, white adipose tissue, lung, small intestine, kidney, spleen and liver.

It is found in the lipid droplet. It catalyses the reaction an aldehyde + NAD(+) + H2O = a carboxylate + NADH + 2 H(+). It carries out the reaction a long-chain fatty aldehyde + NAD(+) + H2O = a long-chain fatty acid + NADH + 2 H(+). The enzyme catalyses a medium-chain fatty aldehyde + NAD(+) + H2O = a medium-chain fatty acid + NADH + 2 H(+). The catalysed reaction is hexadecanoate + NADH + 2 H(+) = hexadecanal + NAD(+) + H2O. It catalyses the reaction octanal + NAD(+) + H2O = octanoate + NADH + 2 H(+). It functions in the pathway alcohol metabolism; ethanol degradation; acetate from ethanol: step 2/2. Functionally, oxidizes medium and long chain fatty aldehydes in lipid droplets into non-toxic fatty acids. This is Aldehyde dehydrogenase family 3 member B2 from Mus musculus (Mouse).